Reading from the N-terminus, the 301-residue chain is UDP-N-acetylenolpyruvoylglucosamine reductase (301 aa).

The 165-residue stretch at 30 to 194 (VGGEADYLVF…LSVKFALAPG (165 aa)) folds into the FAD-binding PCMH-type domain. The active site involves R173. Catalysis depends on S223, which acts as the Proton donor. E293 is an active-site residue.

This sequence belongs to the MurB family. It depends on FAD as a cofactor.

The protein localises to the cytoplasm. It catalyses the reaction UDP-N-acetyl-alpha-D-muramate + NADP(+) = UDP-N-acetyl-3-O-(1-carboxyvinyl)-alpha-D-glucosamine + NADPH + H(+). Its pathway is cell wall biogenesis; peptidoglycan biosynthesis. Functionally, cell wall formation. This is UDP-N-acetylenolpyruvoylglucosamine reductase from Streptococcus pneumoniae (strain JJA).